We begin with the raw amino-acid sequence, 363 residues long: Phosphoserine aminotransferase (363 aa).

Arg-42 is a binding site for L-glutamate. Pyridoxal 5'-phosphate contacts are provided by residues 76-77, Trp-102, Thr-156, Asp-175, and Gln-198; that span reads GR. An N6-(pyridoxal phosphate)lysine modification is found at Lys-199. 240 to 241 contributes to the pyridoxal 5'-phosphate binding site; the sequence is NT.

It belongs to the class-V pyridoxal-phosphate-dependent aminotransferase family. SerC subfamily. As to quaternary structure, homodimer. Requires pyridoxal 5'-phosphate as cofactor.

It is found in the cytoplasm. It catalyses the reaction O-phospho-L-serine + 2-oxoglutarate = 3-phosphooxypyruvate + L-glutamate. The catalysed reaction is 4-(phosphooxy)-L-threonine + 2-oxoglutarate = (R)-3-hydroxy-2-oxo-4-phosphooxybutanoate + L-glutamate. The protein operates within amino-acid biosynthesis; L-serine biosynthesis; L-serine from 3-phospho-D-glycerate: step 2/3. Its pathway is cofactor biosynthesis; pyridoxine 5'-phosphate biosynthesis; pyridoxine 5'-phosphate from D-erythrose 4-phosphate: step 3/5. Its function is as follows. Catalyzes the reversible conversion of 3-phosphohydroxypyruvate to phosphoserine and of 3-hydroxy-2-oxo-4-phosphonooxybutanoate to phosphohydroxythreonine. This chain is Phosphoserine aminotransferase, found in Shewanella sp. (strain MR-7).